The chain runs to 63 residues: uncharacterized protein (63 aa).

The first 18 residues, 1 to 18, serve as a signal peptide directing secretion; the sequence is MLNSEHFNLIQRALDATA.

This is an uncharacterized protein from Bacillus subtilis (strain 168).